The following is an 804-amino-acid chain: Cyclic di-GMP-binding protein (804 aa).

The N-terminal stretch at Met-1–Ala-18 is a signal peptide. Topologically, residues Ala-19–Arg-766 are periplasmic. The segment at Lys-24–Ala-69 is disordered. Residues Val-767 to Phe-787 form a helical membrane-spanning segment. Topologically, residues Arg-788–Ser-804 are cytoplasmic.

The protein belongs to the AcsB/BcsB family. Tightly associated with the cellulose synthase catalytic subunit.

The protein localises to the cell inner membrane. The protein operates within glycan metabolism; bacterial cellulose biosynthesis. Binds the cellulose synthase activator, bis-(3'-5') cyclic diguanylic acid (c-di-GMP). The sequence is that of Cyclic di-GMP-binding protein (bcsBI) from Komagataeibacter xylinus (Gluconacetobacter xylinus).